The following is a 153-amino-acid chain: D-aminoacyl-tRNA deacylase (153 aa).

The Gly-cisPro motif, important for rejection of L-amino acids motif lies at Gly137 to Pro138.

Belongs to the DTD family. Homodimer.

The protein resides in the cytoplasm. The enzyme catalyses glycyl-tRNA(Ala) + H2O = tRNA(Ala) + glycine + H(+). It carries out the reaction a D-aminoacyl-tRNA + H2O = a tRNA + a D-alpha-amino acid + H(+). Functionally, an aminoacyl-tRNA editing enzyme that deacylates mischarged D-aminoacyl-tRNAs. Also deacylates mischarged glycyl-tRNA(Ala), protecting cells against glycine mischarging by AlaRS. Acts via tRNA-based rather than protein-based catalysis; rejects L-amino acids rather than detecting D-amino acids in the active site. By recycling D-aminoacyl-tRNA to D-amino acids and free tRNA molecules, this enzyme counteracts the toxicity associated with the formation of D-aminoacyl-tRNA entities in vivo and helps enforce protein L-homochirality. This chain is D-aminoacyl-tRNA deacylase, found in Methylococcus capsulatus (strain ATCC 33009 / NCIMB 11132 / Bath).